The sequence spans 356 residues: GTPase Obg (356 aa).

The 159-residue stretch at 1–159 (MKFLDEAKVY…RWIWLRMKLI (159 aa)) folds into the Obg domain. Residues 160–327 (ADAGLVGLPN…VLRALTDVIS (168 aa)) form the OBG-type G domain. GTP is bound by residues 166 to 173 (GLPNAGKS), 191 to 195 (FTTLH), 212 to 215 (DIPG), 279 to 282 (NKID), and 308 to 310 (SGV). The Mg(2+) site is built by Ser173 and Thr193. A disordered region spans residues 329-356 (APVSTKAKGEPTENETPPPSTGWSPLSN).

This sequence belongs to the TRAFAC class OBG-HflX-like GTPase superfamily. OBG GTPase family. In terms of assembly, monomer. Mg(2+) serves as cofactor.

It localises to the cytoplasm. In terms of biological role, an essential GTPase which binds GTP, GDP and possibly (p)ppGpp with moderate affinity, with high nucleotide exchange rates and a fairly low GTP hydrolysis rate. Plays a role in control of the cell cycle, stress response, ribosome biogenesis and in those bacteria that undergo differentiation, in morphogenesis control. This chain is GTPase Obg, found in Afipia carboxidovorans (strain ATCC 49405 / DSM 1227 / KCTC 32145 / OM5) (Oligotropha carboxidovorans).